The primary structure comprises 538 residues: Guanine nucleotide-binding protein-like 3 (538 aa).

Residues 1-45 (MKRPKLKKASKRMTCHKRYKIQKKVREHHRKLRKEAKKRGHKKPR) are compositionally biased toward basic residues. 2 disordered regions span residues 1 to 57 (MKRP…APFK) and 69 to 126 (QQLE…NPKK). The interval 2–46 (KRPKLKKASKRMTCHKRYKIQKKVREHHRKLRKEAKKRGHKKPRK) is basic. A coiled-coil region spans residues 54 to 95 (APFKEALLREAELRKQQLEELKQQQKLDRQKEQERKRKLEVS). Positions 69 to 93 (QQLEELKQQQKLDRQKEQERKRKLE) are enriched in basic and acidic residues. Lysine 79 is subject to N6-acetyllysine. A Glycyl lysine isopeptide (Lys-Gly) (interchain with G-Cter in SUMO2) cross-link involves residue lysine 91. A phosphoserine mark is found at serine 95 and serine 101. The segment covering 114-126 (RKKAKAGKQNPKK) has biased composition (basic residues). Residues 129-307 (CQELKKVIEA…IIDSPCLIIS (179 aa)) form the CP-type G domain. 176 to 179 (NKSD) lines the GTP pocket. Residues lysine 177, lysine 248, lysine 262, and lysine 270 each participate in a glycyl lysine isopeptide (Lys-Gly) (interchain with G-Cter in SUMO2) cross-link. A GTP-binding site is contributed by 256-263 (GFPNVGKS). Residues 277–451 (VGISMGLTRS…HLTNRILFRS (175 aa)) form an intermediate region. 300 to 303 (DSPC) contributes to the GTP binding site. Basic and acidic residues predominate over residues 460–475 (DEKDIVEESPRQTEDK). Residues 460–532 (DEKDIVEESP…RASQEDETYD (73 aa)) are acidic. Residues 460 to 538 (DEKDIVEESP…ETYDFTTDYI (79 aa)) are disordered. Phosphoserine occurs at positions 493, 505, and 518. Over residues 506-518 (PEQSTAGKPSDGS) the composition is skewed to polar residues.

The protein belongs to the TRAFAC class YlqF/YawG GTPase family. Interacts with MDM2; this interaction stabilizes MDM2. Interaction with MDM2 occurs in the nucleoplasm and is triggered by a nucleolar release mechanism, such as mitosis-induced nucleolar disassembly. Indirectly interacts with TP53, via MDM2-binding. Interacts with TSC22D1 isoform 2. Expressed in the adult bone marrow population that is enriched in hematopoietic stem cells.

It localises to the nucleus. It is found in the nucleolus. Functionally, may be required to maintain the proliferative capacity of stem cells. Stabilizes MDM2 by preventing its ubiquitination, and hence proteasomal degradation. The sequence is that of Guanine nucleotide-binding protein-like 3 (Gnl3) from Mus musculus (Mouse).